Consider the following 417-residue polypeptide: Cobalamin binding intrinsic factor (417 aa).

The first 22 residues, 1 to 22 (MAWFSLHLLHLLWAAAGTSTWA), serve as a signal peptide directing secretion. Intrachain disulfides connect Cys-26-Cys-246, Cys-103-Cys-288, and Cys-143-Cys-182. Residue Asn-100 is glycosylated (N-linked (GlcNAc...) asparagine). Asp-171 contributes to the cob(II)alamin binding site. The residue at position 191 (Ser-191) is a Phosphoserine. Asn-209 is a glycosylation site (N-linked (GlcNAc...) asparagine). Asp-222 and Gln-270 together coordinate cob(II)alamin. N-linked (GlcNAc...) asparagine glycosylation is found at Asn-311 and Asn-330. Residues 365-370 (SWGLVV) and 386-395 (WQFLSGKTPL) each bind cob(II)alamin. N-linked (GlcNAc...) asparagine glycosylation occurs at Asn-413.

Belongs to the eukaryotic cobalamin transport proteins family. In terms of assembly, interacts with CUBN (via CUB domains).

It is found in the secreted. Promotes absorption of the essential vitamin cobalamin (Cbl) in the ileum. After interaction with CUBN, the CBLIF-cobalamin complex is internalized via receptor-mediated endocytosis. In Canis lupus familiaris (Dog), this protein is Cobalamin binding intrinsic factor (CBLIF).